The primary structure comprises 459 residues: Cysteine--tRNA ligase (459 aa).

C31 is a Zn(2+) binding site. The 'HIGH' region signature appears at 33 to 43 (PTVYDNPHIGN). Residues C216, H241, and E245 each contribute to the Zn(2+) site. A 'KMSKS' region motif is present at residues 274–278 (KMSKS). ATP is bound at residue K277.

The protein belongs to the class-I aminoacyl-tRNA synthetase family. As to quaternary structure, monomer. It depends on Zn(2+) as a cofactor.

It localises to the cytoplasm. The enzyme catalyses tRNA(Cys) + L-cysteine + ATP = L-cysteinyl-tRNA(Cys) + AMP + diphosphate. This chain is Cysteine--tRNA ligase, found in Rickettsia canadensis (strain McKiel).